A 500-amino-acid chain; its full sequence is Glycerol-3-phosphate acyltransferase 7 (500 aa).

2 helical membrane-spanning segments follow: residues 38–58 (GLIR…LDVL) and 235–255 (ALII…RIFV). The HXXXXD motif signature appears at 298-303 (HRTLMD).

This sequence belongs to the GPAT/DAPAT family. Weakly or not expressed in roots, leaves, seedlings, developing siliques and flower buds.

It is found in the membrane. The catalysed reaction is sn-glycerol 3-phosphate + an acyl-CoA = a 1-acyl-sn-glycero-3-phosphate + CoA. It participates in phospholipid metabolism; CDP-diacylglycerol biosynthesis; CDP-diacylglycerol from sn-glycerol 3-phosphate: step 1/3. In terms of biological role, esterifies acyl-group from acyl-ACP to the sn-1 position of glycerol-3-phosphate, an essential step in glycerolipid biosynthesis. The protein is Glycerol-3-phosphate acyltransferase 7 (GPAT7) of Arabidopsis thaliana (Mouse-ear cress).